The following is a 205-amino-acid chain: Large ribosomal subunit protein uL4 (205 aa).

Residues 43–97 (GKRQGTSKVKNRSAVRGGGKKPWRQKGTGRARQGSIRAPQWRGGGTVFGPTPRSY) form a disordered region. The span at 51–71 (VKNRSAVRGGGKKPWRQKGTG) shows a compositional bias: basic residues.

The protein belongs to the universal ribosomal protein uL4 family. Part of the 50S ribosomal subunit.

Functionally, one of the primary rRNA binding proteins, this protein initially binds near the 5'-end of the 23S rRNA. It is important during the early stages of 50S assembly. It makes multiple contacts with different domains of the 23S rRNA in the assembled 50S subunit and ribosome. Forms part of the polypeptide exit tunnel. The chain is Large ribosomal subunit protein uL4 from Lactobacillus acidophilus (strain ATCC 700396 / NCK56 / N2 / NCFM).